Consider the following 250-residue polypeptide: tRNA pseudouridine synthase A (250 aa).

D52 acts as the Nucleophile in catalysis. Residue Y110 coordinates substrate.

Belongs to the tRNA pseudouridine synthase TruA family. As to quaternary structure, homodimer.

The catalysed reaction is uridine(38/39/40) in tRNA = pseudouridine(38/39/40) in tRNA. In terms of biological role, formation of pseudouridine at positions 38, 39 and 40 in the anticodon stem and loop of transfer RNAs. The sequence is that of tRNA pseudouridine synthase A from Citrifermentans bemidjiense (strain ATCC BAA-1014 / DSM 16622 / JCM 12645 / Bem) (Geobacter bemidjiensis).